The following is a 106-amino-acid chain: Phosphoribosyl-ATP pyrophosphatase (106 aa).

The protein belongs to the PRA-PH family.

It is found in the cytoplasm. The enzyme catalyses 1-(5-phospho-beta-D-ribosyl)-ATP + H2O = 1-(5-phospho-beta-D-ribosyl)-5'-AMP + diphosphate + H(+). The protein operates within amino-acid biosynthesis; L-histidine biosynthesis; L-histidine from 5-phospho-alpha-D-ribose 1-diphosphate: step 2/9. This Rhizorhabdus wittichii (strain DSM 6014 / CCUG 31198 / JCM 15750 / NBRC 105917 / EY 4224 / RW1) (Sphingomonas wittichii) protein is Phosphoribosyl-ATP pyrophosphatase.